We begin with the raw amino-acid sequence, 187 residues long: Proline-rich protein 29 (187 aa).

The tract at residues 133–187 (HQPPWQGEPRIQHQPPASRQEEVRDVPPPPPPSATGTVGADVPPASDYYDAESLP) is disordered.

This is Proline-rich protein 29 (Prr29) from Mus musculus (Mouse).